A 188-amino-acid polypeptide reads, in one-letter code: Inosine triphosphate pyrophosphatase (188 aa).

7 to 12 (TGNAGK) contributes to the ITP binding site. E36 contributes to the Mg(2+) binding site. ITP is bound by residues K48, 64 to 65 (DT), K81, 140 to 143 (FGWN), K163, and 168 to 169 (HR).

Belongs to the HAM1 NTPase family. Homodimer. It depends on Mg(2+) as a cofactor. Requires Mn(2+) as cofactor.

It localises to the cytoplasm. The protein localises to the nucleus. The enzyme catalyses ITP + H2O = IMP + diphosphate + H(+). It carries out the reaction dITP + H2O = dIMP + diphosphate + H(+). It catalyses the reaction XTP + H2O = XMP + diphosphate + H(+). Pyrophosphatase that hydrolyzes non-canonical purine nucleotides such as inosine triphosphate (ITP), deoxyinosine triphosphate (dITP) or xanthosine 5'-triphosphate (XTP) to their respective monophosphate derivatives. The enzyme does not distinguish between the deoxy- and ribose forms. Probably excludes non-canonical purines from RNA and DNA precursor pools, thus preventing their incorporation into RNA and DNA and avoiding chromosomal lesions. This chain is Inosine triphosphate pyrophosphatase, found in Yarrowia lipolytica (strain CLIB 122 / E 150) (Yeast).